A 91-amino-acid chain; its full sequence is Acyl carrier protein (91 aa).

In terms of domain architecture, Carrier spans 4–79; that stretch reads QQILDKVQSI…QAVDYILQHK (76 aa). Residue serine 39 is modified to O-(pantetheine 4'-phosphoryl)serine.

The protein belongs to the acyl carrier protein (ACP) family. 4'-phosphopantetheine is transferred from CoA to a specific serine of apo-ACP by AcpS. This modification is essential for activity because fatty acids are bound in thioester linkage to the sulfhydryl of the prosthetic group.

It localises to the plastid. The protein resides in the chloroplast. The protein operates within lipid metabolism; fatty acid biosynthesis. Functionally, carrier of the growing fatty acid chain in fatty acid biosynthesis. The sequence is that of Acyl carrier protein from Cyanidioschyzon merolae (strain NIES-3377 / 10D) (Unicellular red alga).